Here is a 434-residue protein sequence, read N- to C-terminus: MLLWTAVLLFVPCVGKTVWLYLQAWPNPVFEGDALTLRCQGWKNTPLSQVKFYRDGKFLHFSKENQTLSMGAATVQSRGQYSCSGQVMYIPQTFTQTSETAMVQVQELFPPPVLSAIPSPEPREGSLVTLRCQTKLHPLRSALRLLFSFHKDGHTLQDRGPHPELCIPGAKEGDSGLYWCEVAPEGGQVQKQSPQLEVRVQAPVSRPVLTLHHGPADPAVGDMVQLLCEAQRGSPPILYSFYLDEKIVGNHSAPCGGTTSLLFPVKSEQDAGNYSCEAENSVSRERSEPKKLSLKGSQVLFTPASNWLVPWLPASLLGLMVIAAALLVYVRSWRKAGPLPSQIPPTAPGGEQCPLYANVHHQKGKDEGVVYSVVHRTSKRSEARSAEFTVGRKDSSIICAEVRCLQPSEVSSTEVNMRSRTLQEPLSDCEEVLC.

Positions 1-19 (MLLWTAVLLFVPCVGKTVW) are cleaved as a signal peptide. Ig-like C2-type domains are found at residues 20–95 (LYLQ…QTFT), 111–197 (PPVL…PQLE), and 207–293 (PVLT…KKLS). At 20–307 (LYLQAWPNPV…QVLFTPASNW (288 aa)) the chain is on the extracellular side. 3 disulfides stabilise this stretch: C39/C83, C132/C180, and C228/C276. N65 is a glycosylation site (N-linked (GlcNAc...) asparagine). A glycan (N-linked (GlcNAc...) asparagine) is linked at N273. A helical transmembrane segment spans residues 308–328 (LVPWLPASLLGLMVIAAALLV). The Cytoplasmic portion of the chain corresponds to 329-434 (YVRSWRKAGP…PLSDCEEVLC (106 aa)). The ITIM motif signature appears at 369-374 (VVYSVV). Residue Y371 is modified to Phosphotyrosine.

As to quaternary structure, interacts (tyrosine phosphorylated) with PTPN11. Interacts (tyrosine phosphorylated) with PTPN6, INPP5D, INPPL1 and GRB2. Interacts with class II MHC HLA-DR when the alpha chain is associated with a beta-1, beta-4 or a beta-5 but not a beta-3 chain. Post-translationally, phosphorylated on Tyr residues. Tyrosine phosphorylation induces association with phosphatase PTPN11, PTPN6, INPP5D, INPPL1 and GRB2. As to expression, expressed by cytolytic cells including NK cells, effector and effector-memory CD8(+) T-cells, and a subset of NKT cells (at protein level). Also expressed in gamma delta T cells and in a rare subset of effector CD4(+) T-cells (at protein level). Expressed in spleen, skin, peripheral blood leukocytes, liver, lung, bone marrow, small intestine and placenta. Expression among T-cells is greatly expanded in HIV-1 infected individuals, and includes not only effector and effector-memory CD8(+) T-cells but also populations of CD4(+) T-cells. Expression among CD8(+) T-cells and NK cells is expanded in individuals with chronic lymphocytic leukemia (CLL) but is reduced in PBMCs from patients with acute (AML), chronic myeloid leukemia (CML) and non-Hodgkin's lymphoma. Expression is higher in PBMCs and/or CD3(+) cells of patients with autoimmune diseases, such as rheumatoid arthritis (RA), systemic lupus erythematosus (SLE) and idiopathic thrombocytopenia purpura (ITP). In contrast, expression in CD3(+) cells from patients with lupus anticoagulans (LA) is higher.

Its subcellular location is the cell membrane. Acts as a MHC class II receptor. When stimulated on its own, does not play a role in cytokine production or the release of cytotoxic granules by NK cells and cytotoxic CD8(+) T cells. Does not act as an Fc receptor. The protein is Fc receptor-like protein 6 (FCRL6) of Homo sapiens (Human).